Reading from the N-terminus, the 165-residue chain is MPRIALYPGSFDPVTNGHLDVVRRAVTLCDRLIVAIGVHPGKKPLFSTEERLAMVRDVFGPIAAEAGCAFDCTTYDNLTITAAQQAGATIMVRGLRDGTDLDYEMQIAGMNETMAPTVQTVFVPASVAVRPITATLVRQIAAMGGDVSAFVPPQVAALLKTKFAG.

Residue S10 coordinates substrate. Residues 10 to 11 and H18 each bind ATP; that span reads SF. Substrate-binding residues include K42, T79, and R93. Residues 94–96, E104, and 129–135 contribute to the ATP site; these read GLR and VRPITAT.

The protein belongs to the bacterial CoaD family. In terms of assembly, homohexamer. Requires Mg(2+) as cofactor.

The protein resides in the cytoplasm. It catalyses the reaction (R)-4'-phosphopantetheine + ATP + H(+) = 3'-dephospho-CoA + diphosphate. Its pathway is cofactor biosynthesis; coenzyme A biosynthesis; CoA from (R)-pantothenate: step 4/5. In terms of biological role, reversibly transfers an adenylyl group from ATP to 4'-phosphopantetheine, yielding dephospho-CoA (dPCoA) and pyrophosphate. The polypeptide is Phosphopantetheine adenylyltransferase (Rhodopseudomonas palustris (strain BisA53)).